Consider the following 334-residue polypeptide: Malate dehydrogenase, cytoplasmic (334 aa).

N-acetylserine is present on serine 2. NAD(+) is bound by residues 11–17 (GAAGQIA) and aspartate 42. Substrate is bound by residues arginine 92 and arginine 98. Asparagine 105 provides a ligand contact to NAD(+). N6-succinyllysine is present on lysine 110. Glutamine 112 lines the NAD(+) pocket. N6-acetyllysine is present on residues lysine 118 and lysine 121. Position 129-131 (129-131 (VGN)) interacts with NAD(+). Residues asparagine 131 and arginine 162 each contribute to the substrate site. Histidine 187 (proton acceptor) is an active-site residue. Position 214 is an N6-succinyllysine (lysine 214). Serine 217 carries the phosphoserine modification. Arginine 230 bears the Omega-N-methylarginine mark. Serine 241 carries the post-translational modification Phosphoserine. The residue at position 298 (lysine 298) is an N6-acetyllysine; alternate. Lysine 298 is modified (N6-succinyllysine; alternate). Serine 309 carries the phosphoserine modification. The residue at position 318 (lysine 318) is an N6-succinyllysine. Residues serine 332 and serine 333 each carry the phosphoserine modification.

This sequence belongs to the LDH/MDH superfamily. MDH type 2 family. Homodimer. ISGylated. Post-translationally, acetylation at Lys-118 dramatically enhances enzymatic activity and promotes adipogenic differentiation.

It localises to the cytoplasm. Its subcellular location is the cytosol. The enzyme catalyses (S)-malate + NAD(+) = oxaloacetate + NADH + H(+). It catalyses the reaction (2R)-2-hydroxy-3-(4-hydroxyphenyl)propanoate + NAD(+) = 3-(4-hydroxyphenyl)pyruvate + NADH + H(+). It carries out the reaction (S)-2-hydroxyglutarate + NAD(+) = 2-oxoglutarate + NADH + H(+). Functionally, catalyzes the reduction of aromatic alpha-keto acids in the presence of NADH. Plays essential roles in the malate-aspartate shuttle and the tricarboxylic acid cycle, important in mitochondrial NADH supply for oxidative phosphorylation. Catalyzes the reduction of 2-oxoglutarate to 2-hydroxyglutarate, leading to elevated reactive oxygen species (ROS). The protein is Malate dehydrogenase, cytoplasmic (Mdh1) of Rattus norvegicus (Rat).